The primary structure comprises 190 residues: Endoribonuclease YbeY (190 aa).

Positions 147, 151, and 157 each coordinate Zn(2+).

The protein belongs to the endoribonuclease YbeY family. Zn(2+) is required as a cofactor.

Its subcellular location is the cytoplasm. Single strand-specific metallo-endoribonuclease involved in late-stage 70S ribosome quality control and in maturation of the 3' terminus of the 16S rRNA. The chain is Endoribonuclease YbeY from Nitrobacter winogradskyi (strain ATCC 25391 / DSM 10237 / CIP 104748 / NCIMB 11846 / Nb-255).